A 340-amino-acid chain; its full sequence is ATP-dependent 6-phosphofructokinase (340 aa).

Gly-11 is an ATP binding site. ADP is bound at residue 21–25; that stretch reads RAVVR. ATP contacts are provided by residues 72–73 and 102–105; these read RY and GDGS. Position 103 (Asp-103) interacts with Mg(2+). 125-127 is a binding site for substrate; sequence TID. The active-site Proton acceptor is the Asp-127. Arg-154 contributes to the ADP binding site. Residues Arg-162 and 169-171 contribute to the substrate site; that span reads MGR. ADP-binding positions include 185–187, Lys-211, and 213–215; these read GAD and KNH. Substrate contacts are provided by residues Glu-222, Arg-244, and 250–253; that span reads HIQR.

Belongs to the phosphofructokinase type A (PFKA) family. ATP-dependent PFK group I subfamily. Prokaryotic clade 'B1' sub-subfamily. In terms of assembly, homotetramer. Requires Mg(2+) as cofactor.

The protein resides in the cytoplasm. It carries out the reaction beta-D-fructose 6-phosphate + ATP = beta-D-fructose 1,6-bisphosphate + ADP + H(+). Its pathway is carbohydrate degradation; glycolysis; D-glyceraldehyde 3-phosphate and glycerone phosphate from D-glucose: step 3/4. Allosterically activated by ADP and other diphosphonucleosides, and allosterically inhibited by phosphoenolpyruvate. In terms of biological role, catalyzes the phosphorylation of D-fructose 6-phosphate to fructose 1,6-bisphosphate by ATP, the first committing step of glycolysis. The sequence is that of ATP-dependent 6-phosphofructokinase from Lactococcus lactis subsp. lactis (Streptococcus lactis).